A 604-amino-acid polypeptide reads, in one-letter code: Aspartate--tRNA(Asp/Asn) ligase (604 aa).

Glu175 is a binding site for L-aspartate. The interval 199 to 202 (QQFK) is aspartate. The L-aspartate site is built by Arg221 and His456. Residue 221-223 (RDE) coordinates ATP. Position 496 (Glu496) interacts with ATP. Arg503 contributes to the L-aspartate binding site. 548–551 (GVDR) contacts ATP.

This sequence belongs to the class-II aminoacyl-tRNA synthetase family. Type 1 subfamily. In terms of assembly, homodimer.

The protein resides in the cytoplasm. The enzyme catalyses tRNA(Asx) + L-aspartate + ATP = L-aspartyl-tRNA(Asx) + AMP + diphosphate. Aspartyl-tRNA synthetase with relaxed tRNA specificity since it is able to aspartylate not only its cognate tRNA(Asp) but also tRNA(Asn). Reaction proceeds in two steps: L-aspartate is first activated by ATP to form Asp-AMP and then transferred to the acceptor end of tRNA(Asp/Asn). This is Aspartate--tRNA(Asp/Asn) ligase from Methylobacterium sp. (strain 4-46).